The following is a 919-amino-acid chain: Aminodeoxychorismate synthase, chloroplastic (919 aa).

Residues 1–45 constitute a chloroplast transit peptide; the sequence is MNMNFSFCSTSSELSYPSENVLRFSVASRLFSPKWKKSFISLPCR. Positions 86–342 constitute a Glutamine amidotransferase type-1 domain; the sequence is RTLLIDNYDS…KDITVNYWSR (257 aa). Cysteine 172 serves as the catalytic Nucleophile. Residues histidine 316 and glutamate 318 contribute to the active site. Residues 436–910 form a PABB component region; that stretch reads IFMELFGKNR…KTRAPANAVM (475 aa).

This sequence in the C-terminal section; belongs to the anthranilate synthase component I family.

It localises to the plastid. Its subcellular location is the chloroplast. The enzyme catalyses chorismate + L-glutamine = 4-amino-4-deoxychorismate + L-glutamate. The protein operates within cofactor biosynthesis; tetrahydrofolate biosynthesis; 4-aminobenzoate from chorismate: step 1/2. Activated by chorismate and inhibited by dihydrofolate and methotrexate. Functionally, bifunctional enzyme that catalyzes the biosynthesis of 4-amino-4-deoxychorismate (ADC) from chorismate and glutamine. In the first step, a glutamine amidotransferase generates ammonia that is channelled between the binding sites of glutamine and chorismate and used along with chorismate in the second step, catalyzed by aminodeoxychorismate synthase, to produce ADC. Required for the synthesis of 4-aminobenzoate (PABA), an important component in tetrahydrofolate biosynthesis. Does not possess ADC lyase activity. In Arabidopsis thaliana (Mouse-ear cress), this protein is Aminodeoxychorismate synthase, chloroplastic (ADCS).